The sequence spans 70 residues: Large ribosomal subunit protein uL29 (70 aa).

Belongs to the universal ribosomal protein uL29 family.

The polypeptide is Large ribosomal subunit protein uL29 (rpl29) (Methanocaldococcus jannaschii (strain ATCC 43067 / DSM 2661 / JAL-1 / JCM 10045 / NBRC 100440) (Methanococcus jannaschii)).